We begin with the raw amino-acid sequence, 416 residues long: Phosphatidylinositol 5-phosphate 4-kinase type-2 gamma (416 aa).

A PIPK domain is found at 38–415; it reads ASDPMLSVFM…RFREFISNIF (378 aa).

Phosphorylated, phosphorylation is induced by EGF.

Its subcellular location is the endoplasmic reticulum. The protein localises to the cytoplasm. The enzyme catalyses a 1,2-diacyl-sn-glycero-3-phospho-(1D-myo-inositol-5-phosphate) + ATP = a 1,2-diacyl-sn-glycero-3-phospho-(1D-myo-inositol-4,5-bisphosphate) + ADP + H(+). It catalyses the reaction 1,2-dihexadecanoyl-sn-glycero-3-phospho-(1D-myo-inositol-5-phosphate) + ATP = 1,2-dihexadecanoyl-sn-glycero-3-phospho-(1D-myo-inositol-4,5-bisphosphate) + ADP + H(+). It carries out the reaction 1,2-dihexadecanoyl-sn-glycero-3-phospho-(1D-myo-inositol-5-phosphate) + GTP = 1,2-dihexadecanoyl-sn-glycero-3-phospho-(1D-myo-inositol-4,5-bisphosphate) + GDP + H(+). Its function is as follows. Phosphatidylinositol 5-phosphate 4-kinase with low enzymatic activity. May be a GTP sensor, has higher GTP-dependent kinase activity than ATP-dependent kinase activity. This Danio rerio (Zebrafish) protein is Phosphatidylinositol 5-phosphate 4-kinase type-2 gamma (pip4k2c).